The primary structure comprises 437 residues: CCA-adding enzyme (437 aa).

ATP is bound by residues serine 50 and lysine 53. CTP contacts are provided by serine 50 and lysine 53. Mg(2+) is bound by residues aspartate 61, aspartate 63, and aspartate 112. Residues histidine 135, lysine 155, and tyrosine 164 each coordinate ATP. CTP is bound by residues histidine 135, lysine 155, and tyrosine 164.

This sequence belongs to the tRNA nucleotidyltransferase/poly(A) polymerase family. Archaeal CCA-adding enzyme subfamily. Homodimer. Mg(2+) serves as cofactor.

The catalysed reaction is a tRNA precursor + 2 CTP + ATP = a tRNA with a 3' CCA end + 3 diphosphate. It catalyses the reaction a tRNA with a 3' CCA end + 2 CTP + ATP = a tRNA with a 3' CCACCA end + 3 diphosphate. Its function is as follows. Catalyzes the addition and repair of the essential 3'-terminal CCA sequence in tRNAs without using a nucleic acid template. Adds these three nucleotides in the order of C, C, and A to the tRNA nucleotide-73, using CTP and ATP as substrates and producing inorganic pyrophosphate. tRNA 3'-terminal CCA addition is required both for tRNA processing and repair. Also involved in tRNA surveillance by mediating tandem CCA addition to generate a CCACCA at the 3' terminus of unstable tRNAs. While stable tRNAs receive only 3'-terminal CCA, unstable tRNAs are marked with CCACCA and rapidly degraded. The sequence is that of CCA-adding enzyme from Thermoplasma volcanium (strain ATCC 51530 / DSM 4299 / JCM 9571 / NBRC 15438 / GSS1).